We begin with the raw amino-acid sequence, 154 residues long: Ribonuclease H (154 aa).

In terms of domain architecture, RNase H type-1 spans 1 to 142 (MRKQVEIFTD…CDELARAAAS (142 aa)). 4 residues coordinate Mg(2+): D10, E48, D70, and D134.

The protein belongs to the RNase H family. As to quaternary structure, monomer. The cofactor is Mg(2+).

It is found in the cytoplasm. It carries out the reaction Endonucleolytic cleavage to 5'-phosphomonoester.. Endonuclease that specifically degrades the RNA of RNA-DNA hybrids. The protein is Ribonuclease H of Pectobacterium atrosepticum (strain SCRI 1043 / ATCC BAA-672) (Erwinia carotovora subsp. atroseptica).